Reading from the N-terminus, the 211-residue chain is Protein-L-isoaspartate O-methyltransferase (211 aa).

Ser59 is an active-site residue.

It belongs to the methyltransferase superfamily. L-isoaspartyl/D-aspartyl protein methyltransferase family.

It is found in the cytoplasm. The enzyme catalyses [protein]-L-isoaspartate + S-adenosyl-L-methionine = [protein]-L-isoaspartate alpha-methyl ester + S-adenosyl-L-homocysteine. In terms of biological role, catalyzes the methyl esterification of L-isoaspartyl residues in peptides and proteins that result from spontaneous decomposition of normal L-aspartyl and L-asparaginyl residues. It plays a role in the repair and/or degradation of damaged proteins. This chain is Protein-L-isoaspartate O-methyltransferase, found in Ignicoccus hospitalis (strain KIN4/I / DSM 18386 / JCM 14125).